The primary structure comprises 132 residues: UPF0332 protein TM_1000 (132 aa).

It belongs to the UPF0332 family.

The protein is UPF0332 protein TM_1000 of Thermotoga maritima (strain ATCC 43589 / DSM 3109 / JCM 10099 / NBRC 100826 / MSB8).